Consider the following 125-residue polypeptide: Small ribosomal subunit protein uS13 (125 aa).

Belongs to the universal ribosomal protein uS13 family. As to quaternary structure, part of the 30S ribosomal subunit. Forms a loose heterodimer with protein S19. Forms two bridges to the 50S subunit in the 70S ribosome.

In terms of biological role, located at the top of the head of the 30S subunit, it contacts several helices of the 16S rRNA. In the 70S ribosome it contacts the 23S rRNA (bridge B1a) and protein L5 of the 50S subunit (bridge B1b), connecting the 2 subunits; these bridges are implicated in subunit movement. Contacts the tRNAs in the A and P-sites. In Orientia tsutsugamushi (strain Boryong) (Rickettsia tsutsugamushi), this protein is Small ribosomal subunit protein uS13.